We begin with the raw amino-acid sequence, 203 residues long: Ribosome-binding factor A (203 aa).

Positions 119-141 are enriched in basic and acidic residues; sequence LAEVRRDARPAGDEDPYRRPRTV. Residues 119 to 203 are disordered; sequence LAEVRRDARP…SPGGDPTAGR (85 aa). Over residues 142 to 169 the composition is skewed to acidic residues; sequence DEDDEDEDEDLVDEFDEFDRVEELDADA.

Belongs to the RbfA family. Monomer. Binds 30S ribosomal subunits, but not 50S ribosomal subunits or 70S ribosomes.

Its subcellular location is the cytoplasm. Functionally, one of several proteins that assist in the late maturation steps of the functional core of the 30S ribosomal subunit. Associates with free 30S ribosomal subunits (but not with 30S subunits that are part of 70S ribosomes or polysomes). Required for efficient processing of 16S rRNA. May interact with the 5'-terminal helix region of 16S rRNA. In Frankia alni (strain DSM 45986 / CECT 9034 / ACN14a), this protein is Ribosome-binding factor A.